The sequence spans 92 residues: Small ribosomal subunit protein uS19 (92 aa).

It belongs to the universal ribosomal protein uS19 family.

Protein S19 forms a complex with S13 that binds strongly to the 16S ribosomal RNA. This Paramagnetospirillum magneticum (strain ATCC 700264 / AMB-1) (Magnetospirillum magneticum) protein is Small ribosomal subunit protein uS19.